Consider the following 415-residue polypeptide: MDLSTITFLLPNSSEDTNGTSAPRLPPHSQCASVLIVLVVTVIILVTIVGNVLVVVAVFTSRALRAPQNLFLVSLAAADILVATLVIPFSLANEVMGYWYLGSTWCAFYLALDVLFCTSSIVHLCAISLDRYWSVTKAVSYNLKRTPRRIKIMITVVWVISAVISFPPLLMTKHDELECLLNNETWYILSSCIVSFFAPGLIMILVYCRIYRVAKQRASTVFVAKNGMERQPSQSETCFVRKGKSEVESPSSHSSGSRERKGELDDIDLEESSVSNRHRNSRFAKSRKVEGAQSCPKPNGRLSWACSRASELEQEPRARQLSLSKSKLAQMREKRFTFVLAVVMGVFVLCWFPFFFTYSLHAICRKSCTIPDSLFNLFFWIGYCNSSVNPIIYTIFNRDFRKAFKKIMCRHSTRT.

At 1-33 (MDLSTITFLLPNSSEDTNGTSAPRLPPHSQCAS) the chain is on the extracellular side. 2 N-linked (GlcNAc...) asparagine glycosylation sites follow: N12 and N18. The chain crosses the membrane as a helical span at residues 34 to 58 (VLIVLVVTVIILVTIVGNVLVVVAV). Residues 59-70 (FTSRALRAPQNL) are Cytoplasmic-facing. The chain crosses the membrane as a helical span at residues 71–96 (FLVSLAAADILVATLVIPFSLANEVM). The Extracellular portion of the chain corresponds to 97–106 (GYWYLGSTWC). The cysteines at positions 106 and 179 are disulfide-linked. A helical transmembrane segment spans residues 107-129 (AFYLALDVLFCTSSIVHLCAISL). Topologically, residues 130-150 (DRYWSVTKAVSYNLKRTPRRI) are cytoplasmic. The chain crosses the membrane as a helical span at residues 151–173 (KIMITVVWVISAVISFPPLLMTK). Residues 174 to 184 (HDELECLLNNE) are Extracellular-facing. N-linked (GlcNAc...) asparagine glycosylation occurs at N183. A helical transmembrane segment spans residues 185 to 208 (TWYILSSCIVSFFAPGLIMILVYC). Residues 209-339 (RIYRVAKQRA…QMREKRFTFV (131 aa)) lie on the Cytoplasmic side of the membrane. A disordered region spans residues 234–299 (QSETCFVRKG…EGAQSCPKPN (66 aa)). A compositionally biased stretch (basic residues) spans 276–286 (NRHRNSRFAKS). The helical transmembrane segment at 340–363 (LAVVMGVFVLCWFPFFFTYSLHAI) threads the bilayer. Over 364–376 (CRKSCTIPDSLFN) the chain is Extracellular. The helical transmembrane segment at 377 to 397 (LFFWIGYCNSSVNPIIYTIFN) threads the bilayer. Residues 398–415 (RDFRKAFKKIMCRHSTRT) are Cytoplasmic-facing.

Belongs to the G-protein coupled receptor 1 family. Adrenergic receptor subfamily. ADRA2D sub-subfamily.

It is found in the cell membrane. Alpha-2 adrenergic receptors mediate the catecholamine-induced inhibition of adenylate cyclase through the action of G proteins. The order of potency for this receptor is dexmedetomidine &gt; norepinephrine = epinephrine &gt; oxymetazoline. The polypeptide is Alpha-2Db adrenergic receptor (adra2db) (Danio rerio (Zebrafish)).